A 589-amino-acid chain; its full sequence is Cysteine/serine-rich nuclear protein 1 (589 aa).

Disordered regions lie at residues 1–62 (MTGL…RDFC) and 309–388 (FREL…GVDD). 2 stretches are compositionally biased toward low complexity: residues 17–41 (SSVSSSSSSSGCQSRSCSPSSSVSR) and 345–368 (DNSCSSDMTDSSTASSSASGTSEA).

The protein belongs to the AXUD1 family. Ubiquitous. Most abundantly expressed in lung, placenta, skeletal muscle, pancreas and leukocyte. Frequently down-regulated in lung, kidney, liver and colon cancers compared with their corresponding normal tissues.

The protein resides in the nucleus. Its function is as follows. Binds to the consensus sequence 5'-AGAGTG-3' and has transcriptional activator activity. May have a tumor-suppressor function. May play a role in apoptosis. This Homo sapiens (Human) protein is Cysteine/serine-rich nuclear protein 1 (CSRNP1).